Consider the following 1377-residue polypeptide: MAYSYTEKKRIRKSFAKRAAVLNVPFLLATQIESFASFLQADTPPPSRLNHGLQAAFTSIFPISSHSGNARLEFVQYMLGEPAFDVKECQQRGLTFASPLRARVRLVILDRDAPKETVKEVKEQEVYMGEIPLMTTTGSFVINGTERVIVSQLHRSPGVFFEHDRGKTHSSGKLLFSARIIPYRGSWLDFEFDPKDALYFRVDRRRKMPATILLRAIGMGPEEILATFHDFDAFHLRGNEAAFELVPDRLRGDVAKFDITDGAGNVIVARDKRITAKHIRELDQAGVKMISVPDEFLLGRIIARNIVDAETGEIVARANDEITEDLLDKLRDAGVKDLETLYVNDLDRGAYISQTLRIDETADQWAARVAIYRMMRPGEPPTEDAVEALFQGLFYSEERYDLSSVGRMKFNRRAYPEKIEDKAPSWLKRFYETVGPRGEEGPATLSNEDILAVIGVLVELRNGRGEIDDIDHLGNRRVRSVGELAENQFRAGLVRVERAVKERLSQAESDNLMPHDLINAKPISAAIKEFFGSSQLSQFMDQTNPLSEITHKRRVSALGPGGLTRERAGFEVRDVHPTHYGRVCPIETPEGPNIGLINSLAVYAQTNRHGFLETPYRKVVDSKVTDQIDFLSAIEEGQYVIAQANAEIDADGMLEGDLVSCRHKGEFALSTADQVQYMDVAPGQIVSVAASLIPFLEHDDANRALMGANMQRQAVPCLRPEKPLVGTGIERTVAVDSGTAVQAMRGGIVDYVDANRIVVRVNDDETLAGEVGVDIYNMIKYTRSNQNTNINQRPVVKVGDHIGKGDVIADGASTDLGELALGQNMLVAFMPWNGYNFEDSILISERVVAEDRFTSIHIEELTVVARDTKLGPEEITRDIASLGEAQLSRLDESGIVYIGAEVDAGDVLVGKVTPKGETQLTPEEKLLRAIFGEKASDVKDTSLRVSSGMNGTVIDVQVFTREGIERDKRAQSIIDDMLRSFKTDLADQMRIVERDAFARIRRLIVGQKANGGPKKLLKGTAITGEYLDSLEFYHWFDIRMADEELAAQLEAIREGLEKTRKDFDQAFEIKKKKLTQGDELPPGVQKMVKVYLAVKRRLQPGDKMAGRHGNKGVVSRIVPIEDMPHMADGTPVDIVLNPLGVPSRMNIGQILETHLGWASKALGNKIGTMLRANAAAAEVRELLEHIYNDNGRPEDMGSLKDDEVIELASNLSKGVPFATPVFDGAKEEEIEAMFELAGLQPGGQVTLYDGRTGDAFDRQVTVGYKHVLKLHHLVDDKMHARSTGPYSLVTQQPLGGKAQFGGQRFGEMEVWALEAYGAAYTLQEMLTVKSDDVTGRTKVYESIVKGEHKIDAGMPESFNVLVKEIRSLAIDIDLDTY.

It belongs to the RNA polymerase beta chain family. The RNAP catalytic core consists of 2 alpha, 1 beta, 1 beta' and 1 omega subunit. When a sigma factor is associated with the core the holoenzyme is formed, which can initiate transcription.

The catalysed reaction is RNA(n) + a ribonucleoside 5'-triphosphate = RNA(n+1) + diphosphate. Functionally, DNA-dependent RNA polymerase catalyzes the transcription of DNA into RNA using the four ribonucleoside triphosphates as substrates. This chain is DNA-directed RNA polymerase subunit beta, found in Aromatoleum aromaticum (strain DSM 19018 / LMG 30748 / EbN1) (Azoarcus sp. (strain EbN1)).